The following is a 163-amino-acid chain: Large ribosomal subunit protein uL10 (163 aa).

It belongs to the universal ribosomal protein uL10 family. Part of the ribosomal stalk of the 50S ribosomal subunit. The N-terminus interacts with L11 and the large rRNA to form the base of the stalk. The C-terminus forms an elongated spine to which L12 dimers bind in a sequential fashion forming a multimeric L10(L12)X complex.

In terms of biological role, forms part of the ribosomal stalk, playing a central role in the interaction of the ribosome with GTP-bound translation factors. The polypeptide is Large ribosomal subunit protein uL10 (Actinobacillus succinogenes (strain ATCC 55618 / DSM 22257 / CCUG 43843 / 130Z)).